A 296-amino-acid chain; its full sequence is Glycine--tRNA ligase alpha subunit (296 aa).

It belongs to the class-II aminoacyl-tRNA synthetase family. As to quaternary structure, tetramer of two alpha and two beta subunits.

The protein localises to the cytoplasm. The catalysed reaction is tRNA(Gly) + glycine + ATP = glycyl-tRNA(Gly) + AMP + diphosphate. This is Glycine--tRNA ligase alpha subunit from Desulfitobacterium hafniense (strain Y51).